The primary structure comprises 342 residues: Protein rough sheath 2 homolog (342 aa).

HTH myb-type domains lie at 1-58 (MQPP…KNYL) and 59-113 (RPGI…EKQQ). DNA-binding regions (H-T-H motif) lie at residues 32 to 58 (WSLV…KNYL) and 86 to 109 (WKKI…EVFK). A coiled-coil region spans residues 253–304 (RRREATEEFEAKMRALREEQAAAVERVEAEYREKMAGLRRDAEAKEQKMAEQ).

Its subcellular location is the nucleus. Its function is as follows. Transcription factor required for normal cell differentiation. May interact with other proteins to repress the knox homeobox genes. This chain is Protein rough sheath 2 homolog (RS2), found in Oryza sativa subsp. japonica (Rice).